Consider the following 253-residue polypeptide: 3-deoxy-manno-octulosonate cytidylyltransferase (253 aa).

The protein belongs to the KdsB family.

It is found in the cytoplasm. The enzyme catalyses 3-deoxy-alpha-D-manno-oct-2-ulosonate + CTP = CMP-3-deoxy-beta-D-manno-octulosonate + diphosphate. Its pathway is nucleotide-sugar biosynthesis; CMP-3-deoxy-D-manno-octulosonate biosynthesis; CMP-3-deoxy-D-manno-octulosonate from 3-deoxy-D-manno-octulosonate and CTP: step 1/1. It functions in the pathway bacterial outer membrane biogenesis; lipopolysaccharide biosynthesis. Its function is as follows. Activates KDO (a required 8-carbon sugar) for incorporation into bacterial lipopolysaccharide in Gram-negative bacteria. The sequence is that of 3-deoxy-manno-octulosonate cytidylyltransferase from Acinetobacter baumannii (strain ATCC 17978 / DSM 105126 / CIP 53.77 / LMG 1025 / NCDC KC755 / 5377).